The chain runs to 100 residues: Small ribosomal subunit protein uS14c (100 aa).

It belongs to the universal ribosomal protein uS14 family. Part of the 30S ribosomal subunit.

Its subcellular location is the plastid. It is found in the chloroplast. Its function is as follows. Binds 16S rRNA, required for the assembly of 30S particles. This is Small ribosomal subunit protein uS14c from Emiliania huxleyi (Coccolithophore).